A 93-amino-acid polypeptide reads, in one-letter code: Putative pterin-4-alpha-carbinolamine dehydratase (93 aa).

It belongs to the pterin-4-alpha-carbinolamine dehydratase family.

The enzyme catalyses (4aS,6R)-4a-hydroxy-L-erythro-5,6,7,8-tetrahydrobiopterin = (6R)-L-erythro-6,7-dihydrobiopterin + H2O. The chain is Putative pterin-4-alpha-carbinolamine dehydratase from Sulfurisphaera tokodaii (strain DSM 16993 / JCM 10545 / NBRC 100140 / 7) (Sulfolobus tokodaii).